We begin with the raw amino-acid sequence, 413 residues long: uncharacterized protein (413 aa).

2 disordered regions span residues 108 to 158 (ESVP…SKIS) and 232 to 257 (DRLG…RLGA). Ser-115 bears the Phosphoserine mark. The segment covering 127-139 (SAASRMIANSLNH) has biased composition (polar residues). Ser-141 is subject to Phosphoserine. Lys-239 is covalently cross-linked (Glycyl lysine isopeptide (Lys-Gly) (interchain with G-Cter in SUMO2)). Residues Ser-269 and Ser-296 each carry the phosphoserine modification. The segment at 290 to 336 (RGPTKASAQPALTVKAKAASSATSTATTPKLRRLALPSRPGLQKKPD) is disordered. Residues 302–318 (TVKAKAASSATSTATTP) are compositionally biased toward low complexity. Ser-342 bears the Phosphoserine mark.

This is an uncharacterized protein from Mus musculus (Mouse).